The primary structure comprises 336 residues: D-alanine--D-alanine ligase (336 aa).

The ATP-grasp domain occupies 124–330; the sequence is KMWFSALGVP…FTEYLIDVIG (207 aa). 154-209 serves as a coordination point for ATP; that stretch reads AFDNWGSVFVKAASQGSSVGCYKVDVKANIANVLKDAFSYAPYVVVEQTIHARELE. Positions 284, 297, and 299 each coordinate Mg(2+).

The protein belongs to the D-alanine--D-alanine ligase family. Mg(2+) serves as cofactor. It depends on Mn(2+) as a cofactor.

Its subcellular location is the cytoplasm. The enzyme catalyses 2 D-alanine + ATP = D-alanyl-D-alanine + ADP + phosphate + H(+). The protein operates within cell wall biogenesis; peptidoglycan biosynthesis. In terms of biological role, cell wall formation. The polypeptide is D-alanine--D-alanine ligase (Shewanella frigidimarina (strain NCIMB 400)).